A 1108-amino-acid polypeptide reads, in one-letter code: Lon protease homolog, mitochondrial (1108 aa).

The N-terminal 62 residues, 1-62 (MLRGQSLPWR…RAFSTSSIRR (62 aa)), are a transit peptide targeting the mitochondrion. 2 disordered regions span residues 24 to 192 (PLLP…QKPS) and 299 to 318 (LPPG…PEKK). The segment covering 36–53 (RSNLSISRLSRSPSLSPR) has biased composition (low complexity). Composition is skewed to basic and acidic residues over residues 78 to 103 (EQKD…DSTG) and 119 to 146 (KVAG…KSDP). The segment covering 161–171 (SDTKSSASNGG) has biased composition (polar residues). 2 stretches are compositionally biased toward basic and acidic residues: residues 174–188 (DGGR…DRAL) and 309–318 (NTEDKAPEKK). Residues 200–452 (VMAIPIAKRP…KALVVLKKEL (253 aa)) enclose the Lon N-terminal domain. ATP is bound at residue 605-612 (GPPGVGKT). A compositionally biased stretch (basic and acidic residues) spans 821-855 (DKALTDEGKAAQEESKKETEEGDPKDPPADPEKST). Positions 821 to 862 (DKALTDEGKAAQEESKKETEEGDPKDPPADPEKSTTETPRLA) are disordered. Positions 895 to 1081 (TFPPGVTMGL…SEVFNILFAE (187 aa)) constitute a Lon proteolytic domain. Catalysis depends on residues Ser-987 and Lys-1030.

The protein belongs to the peptidase S16 family. In terms of assembly, homohexamer or homoheptamer. Organized in a ring with a central cavity.

Its subcellular location is the mitochondrion matrix. It catalyses the reaction Hydrolysis of proteins in presence of ATP.. In terms of biological role, ATP-dependent serine protease that mediates the selective degradation of misfolded, unassembled or oxidatively damaged polypeptides as well as certain short-lived regulatory proteins in the mitochondrial matrix. May also have a chaperone function in the assembly of inner membrane protein complexes. Participates in the regulation of mitochondrial gene expression and in the maintenance of the integrity of the mitochondrial genome. Binds to mitochondrial DNA in a site-specific manner. This Aspergillus fumigatus (strain ATCC MYA-4609 / CBS 101355 / FGSC A1100 / Af293) (Neosartorya fumigata) protein is Lon protease homolog, mitochondrial (pim1).